A 756-amino-acid polypeptide reads, in one-letter code: Glutathione biosynthesis bifunctional protein GshAB (756 aa).

Residues 1–338 form a glutamate--cysteine ligase region; the sequence is MNYRELMQKK…TGDIFNEQVA (338 aa). Positions 493-751 constitute an ATP-grasp domain; sequence KKILSAAGFH…LTMDVLKLLY (259 aa). 520-578 is a binding site for ATP; the sequence is LRYANKAFVVKPKSTNYGLGITIFKEGASLEDFTEALRIAFKEDTAVLIEEFLPGTEYR. Mg(2+) contacts are provided by aspartate 700, glutamate 721, and asparagine 723. The Mn(2+) site is built by aspartate 700, glutamate 721, and asparagine 723.

It in the N-terminal section; belongs to the glutamate--cysteine ligase type 1 family. Type 2 subfamily. Monomer. It depends on Mg(2+) as a cofactor. Mn(2+) is required as a cofactor.

It catalyses the reaction L-cysteine + L-glutamate + ATP = gamma-L-glutamyl-L-cysteine + ADP + phosphate + H(+). It carries out the reaction gamma-L-glutamyl-L-cysteine + glycine + ATP = glutathione + ADP + phosphate + H(+). It participates in sulfur metabolism; glutathione biosynthesis; glutathione from L-cysteine and L-glutamate: step 1/2. It functions in the pathway sulfur metabolism; glutathione biosynthesis; glutathione from L-cysteine and L-glutamate: step 2/2. Functionally, synthesizes glutathione from L-glutamate and L-cysteine via gamma-L-glutamyl-L-cysteine. The chain is Glutathione biosynthesis bifunctional protein GshAB from Enterococcus faecalis (strain ATCC 700802 / V583).